The chain runs to 216 residues: MSEAYFRVESGALGPEENFLSLDDILMSHEKLPVRTETAMPRLGAFFLERSAGAETDNAVPQGSKLELPLWLAKGLFDNKRRILSVELPKIYQEGWRTVFSADPNVVDLHKMGPHFYGFGSQLLHFDSPENADISQSLLQTFIGRFRRIMDSSQNAYNEDTSALVARLDEMERGLFQTGQKGLNDFQCWEKGQASQITASNLVQNYKKRKFTDMED.

The segment at methionine 1–glutamate 16 is not essential for folding and stability of GINS complex, but may regulate accessibility to the central complex pore.

Belongs to the GINS3/PSF3 family. As to quaternary structure, component of the GINS complex which is a heterotetramer of GINS1, GINS2, GINS3 and GINS4. Forms a stable subcomplex with GINS2. GINS complex interacts with DNA primase in vitro. Component of the CMG helicase complex, a hexameric ring of related MCM2-7 subunits stabilized by CDC45 and the tetrameric GINS complex.

It is found in the nucleus. Its subcellular location is the chromosome. Required for correct functioning of the GINS complex, a complex that plays an essential role in the initiation of DNA replication, and progression of DNA replication forks. GINS complex is a core component of CDC45-MCM-GINS (CMG) helicase, the molecular machine that unwinds template DNA during replication, and around which the replisome is built. The chain is DNA replication complex GINS protein PSF3 from Homo sapiens (Human).